The chain runs to 51 residues: Putative inactivation escape 1 protein (51 aa).

Highly expressed in pancreas, heart and liver followed by brain, placenta, lung, skeletal muscle and kidney. Mostly expressed in females.

The sequence is that of Putative inactivation escape 1 protein (INE1) from Homo sapiens (Human).